Reading from the N-terminus, the 631-residue chain is tRNA uridine 5-carboxymethylaminomethyl modification enzyme MnmG (631 aa).

Residue G15–G20 participates in FAD binding. The disordered stretch occupies residues T203–T232. A compositionally biased stretch (basic and acidic residues) spans K216–T232. G276 to F290 provides a ligand contact to NAD(+).

The protein belongs to the MnmG family. In terms of assembly, homodimer. Heterotetramer of two MnmE and two MnmG subunits. It depends on FAD as a cofactor.

It localises to the cytoplasm. In terms of biological role, NAD-binding protein involved in the addition of a carboxymethylaminomethyl (cmnm) group at the wobble position (U34) of certain tRNAs, forming tRNA-cmnm(5)s(2)U34. The polypeptide is tRNA uridine 5-carboxymethylaminomethyl modification enzyme MnmG (Lactobacillus gasseri (strain ATCC 33323 / DSM 20243 / BCRC 14619 / CIP 102991 / JCM 1131 / KCTC 3163 / NCIMB 11718 / NCTC 13722 / AM63)).